We begin with the raw amino-acid sequence, 203 residues long: Large ribosomal subunit protein bL25 (203 aa).

Belongs to the bacterial ribosomal protein bL25 family. CTC subfamily. As to quaternary structure, part of the 50S ribosomal subunit; part of the 5S rRNA/L5/L18/L25 subcomplex. Contacts the 5S rRNA. Binds to the 5S rRNA independently of L5 and L18.

Its function is as follows. This is one of the proteins that binds to the 5S RNA in the ribosome where it forms part of the central protuberance. This is Large ribosomal subunit protein bL25 from Psychromonas ingrahamii (strain DSM 17664 / CCUG 51855 / 37).